We begin with the raw amino-acid sequence, 367 residues long: tRNA uridine(34) hydroxylase (367 aa).

The Rhodanese domain maps to 159–249 (EDKNSIVVDV…GIISYAHEIS (91 aa)). The active-site Cysteine persulfide intermediate is cysteine 213.

It belongs to the TrhO family.

It carries out the reaction uridine(34) in tRNA + AH2 + O2 = 5-hydroxyuridine(34) in tRNA + A + H2O. Its function is as follows. Catalyzes oxygen-dependent 5-hydroxyuridine (ho5U) modification at position 34 in tRNAs. In Leptospira borgpetersenii serovar Hardjo-bovis (strain L550), this protein is tRNA uridine(34) hydroxylase.